Reading from the N-terminus, the 77-residue chain is MSGPITLPTLRMMLDYVDTPVLVKLKSGLRIKGVLKTYDQHLNIILGDAEEIGETSIRRLGLTLVRGDSVVVITPAA.

The Sm domain occupies 8-77 (PTLRMMLDYV…DSVVVITPAA (70 aa)).

Belongs to the snRNP Sm proteins family.

The sequence is that of Putative snRNP Sm-like protein from Aeropyrum pernix (strain ATCC 700893 / DSM 11879 / JCM 9820 / NBRC 100138 / K1).